Here is a 154-residue protein sequence, read N- to C-terminus: MRFQDLHPQAGSRRRKRRIGRGIAAGQGASGGFGMRGQKSRSGRPTRPGFEGGQNPLYRRLPKLKHFPLVKRKVYTTINVGRLNTLPANSVVTVQSLLEAGILTTAKYPLKVLGDGELNVKLEVHAAAFSGSARSKIEAAGGVCVETSVAADSE.

Positions 1–57 (MRFQDLHPQAGSRRRKRRIGRGIAAGQGASGGFGMRGQKSRSGRPTRPGFEGGQNPL) are disordered. Gly residues predominate over residues 23-35 (IAAGQGASGGFGM).

The protein belongs to the universal ribosomal protein uL15 family. In terms of assembly, part of the 50S ribosomal subunit.

Binds to the 23S rRNA. The sequence is that of Large ribosomal subunit protein uL15 from Thermosynechococcus vestitus (strain NIES-2133 / IAM M-273 / BP-1).